Consider the following 74-residue polypeptide: Large ribosomal subunit protein bL27c (74 aa).

It belongs to the bacterial ribosomal protein bL27 family.

It localises to the plastid. The protein resides in the chloroplast. The protein is Large ribosomal subunit protein bL27c (rpl27) of Pleurochrysis haptonemofera (Unicellular marine alga).